A 446-amino-acid chain; its full sequence is DNA repair protein RadA (446 aa).

A C4-type zinc finger spans residues 10 to 27 (CQACGNQQSKWLGKCPDC). Position 96-103 (96-103 (GSPGVGKS)) interacts with ATP. The short motif at 253 to 257 (KNRFG) is the RadA KNRFG motif element. The interval 349–446 (DVFVNISGGV…KELSQVLEWM (98 aa)) is lon-protease-like.

This sequence belongs to the RecA family. RadA subfamily.

In terms of biological role, DNA-dependent ATPase involved in processing of recombination intermediates, plays a role in repairing DNA breaks. Stimulates the branch migration of RecA-mediated strand transfer reactions, allowing the 3' invading strand to extend heteroduplex DNA faster. Binds ssDNA in the presence of ADP but not other nucleotides, has ATPase activity that is stimulated by ssDNA and various branched DNA structures, but inhibited by SSB. Does not have RecA's homology-searching function. This chain is DNA repair protein RadA, found in Campylobacter jejuni subsp. jejuni serotype O:2 (strain ATCC 700819 / NCTC 11168).